Here is a 387-residue protein sequence, read N- to C-terminus: Probable NADH-dependent butanol dehydrogenase 1 (387 aa).

Belongs to the iron-containing alcohol dehydrogenase family.

The protein operates within alcohol metabolism; butanol biosynthesis. The sequence is that of Probable NADH-dependent butanol dehydrogenase 1 (yugJ) from Bacillus subtilis (strain 168).